We begin with the raw amino-acid sequence, 192 residues long: A-type ATP synthase subunit E (192 aa).

Belongs to the V-ATPase E subunit family. As to quaternary structure, has multiple subunits with at least A(3), B(3), C, D, E, F, H, I and proteolipid K(x).

It is found in the cell membrane. Component of the A-type ATP synthase that produces ATP from ADP in the presence of a proton gradient across the membrane. This Sulfolobus acidocaldarius (strain ATCC 33909 / DSM 639 / JCM 8929 / NBRC 15157 / NCIMB 11770) protein is A-type ATP synthase subunit E.